Reading from the N-terminus, the 159-residue chain is Phosphopantetheine adenylyltransferase (159 aa).

T9 contributes to the substrate binding site. Residues 9-10 (TF) and H17 each bind ATP. Substrate is bound by residues K41, L73, and R87. ATP is bound by residues 88 to 90 (GLR), E98, and 123 to 129 (YSFISST).

The protein belongs to the bacterial CoaD family. As to quaternary structure, homohexamer. Mg(2+) is required as a cofactor.

The protein resides in the cytoplasm. It catalyses the reaction (R)-4'-phosphopantetheine + ATP + H(+) = 3'-dephospho-CoA + diphosphate. It functions in the pathway cofactor biosynthesis; coenzyme A biosynthesis; CoA from (R)-pantothenate: step 4/5. Functionally, reversibly transfers an adenylyl group from ATP to 4'-phosphopantetheine, yielding dephospho-CoA (dPCoA) and pyrophosphate. This Pseudomonas aeruginosa (strain LESB58) protein is Phosphopantetheine adenylyltransferase.